A 1089-amino-acid chain; its full sequence is MGDGAEIVTRLYGDEKKLAEDGRISELVGSDEVKDNEEEVFEEAIGSQEGLKPESLKTDVLQEDFPLASNDEVCDLEETSRNERGVENLKVNYSEIGESHGEVNEQCITTKEADSDLVTLKMNDYDHGEVADADISYGKMASSLDVVENSEKATSNLATEDVNLENGNTHSSSENGVVSPDENKELVAEVISVSACSVETGSNGIDDEKWEEEIDVSAGMVTEQRNGKTGAEFNSVKIVSGDKSLNDSIEVAAGTLSPLEKSSSEEKGETESQNSNGGHDIQSNKEIVKQQDSSVNIGPEIKESQHMERESEVLSSVSPTESRSDTAALPPARPAGLGRAAPLLEPAPRVTQQPRVNGNVSHNQPQQAEDSTTAETDEHDETREKLQFIRVKFLRLSHRLGQTPHNVVVAQVLYRLGLAEQLRGRNGSRVGAFSFDRASAMAEQLEAAAQDPLDFSCTIMVLGKSGVGKSATINSIFDELKISTDAFQVGTKKVQDIEGFVQGIKVRVIDTPGLLPSWSDQHKNEKILKSVRAFIKKSPPDIVLYLDRLDMQSRDSGDMPLLRTITDVFGPSIWFNAIVGLTHAASAPPDGPNGTASSYDMFVTQRSHVIQQAIRQAAGDMRLMNPVSLVENHSACRTNRAGQRVLPNGQVWKPHLLLLSFASKILAEANALLKLQDNIPGGQFATRSKAPPLPLLLSSLLQSRPQAKLPEQQYDDEDDEDDLDESSDSEEESEYDELPPFKRLTKAEMTKLSKSQKKEYLDEMEYREKLFMKRQMKEERKRRKLLKKFAAEIKDMPNGYSENVEEERSEPASVPVPMPDLSLPASFDSDNPTHRYRYLDTSNQWLVRPVLETHGWDHDIGYEGVNAERLFVVKDKIPVSFSGQVTKDKKDAHVQLELASSVKHGEGRSTSLGFDMQNAGKELAYTIRSETRFNKFRKNKAAAGLSVTLLGDSVSAGLKVEDKLIANKRFRMVMSGGAMTSRGDVAYGGTLEAQFRDKDYPLGRFLSTLGLSVMDWHGDLAIGGNIQSQVPIGRSSNLIARANLNNRGAGQVSIRVNSSEQLQLAVVALVPLFKKLLTYYSPEQMQYGH.

Gly2 is modified (N-acetylglycine). Disordered regions lie at residues 158-179 (ATED…GVVS), 255-339 (TLSP…GLGR), and 353-381 (QPRV…EHDE). Over residues 165–176 (ENGNTHSSSENG) the composition is skewed to polar residues. Ser179, Ser263, and Ser283 each carry phosphoserine. Basic and acidic residues predominate over residues 300-312 (EIKESQHMERESE). Residues 327–339 (AALPPARPAGLGR) are compositionally biased toward low complexity. The span at 353 to 374 (QPRVNGNVSHNQPQQAEDSTTA) shows a compositional bias: polar residues. An AIG1-type G domain is found at 454-683 (DFSCTIMVLG…KLQDNIPGGQ (230 aa)). Residues 463-470 (GKSGVGKS) form a G1 region. GTP contacts are provided by residues 466 to 471 (GVGKSA) and 485 to 490 (DAFQVG). Ser470 provides a ligand contact to Mg(2+). Residues 485-488 (DAFQ) form a homodimerization region. Positions 489–493 (VGTKK) are G2. The tract at residues 510–513 (DTPG) is G3. Residues 548–553 (RLDMQS) are homodimerization. Residues 582–585 (THAA) are G4. Residues His583 and 631-632 (EN) each bind GTP. Residues 631-633 (ENH) are G5. The disordered stretch occupies residues 710-748 (PEQQYDDEDDEDDLDESSDSEEESEYDELPPFKRLTKAE). Residues 713–737 (QYDDEDDEDDLDESSDSEEESEYDE) are compositionally biased toward acidic residues. A coiled-coil region spans residues 767 to 788 (REKLFMKRQMKEERKRRKLLKK). The chain crosses the membrane as a helical span at residues 1064-1080 (LAVVALVPLFKKLLTYY).

The protein belongs to the TRAFAC class TrmE-Era-EngA-EngB-Septin-like GTPase superfamily. AIG1/Toc34/Toc159-like paraseptin GTPase family. TOC159 subfamily. Homodimer. Part of the TOC core complex that includes 1 protein for the specific recognition of transit peptides surrounded by a ring composed of four proteins forming translocation channels, and four to five GTP-binding proteins providing energy. This core complex can interact with components of the TIC complex to form a larger import complex. Chloroplastic protein precursor such as prSS (precursor of the RuBisCO small subunit) interacts with these complexes. The TOC complex contains a specific subset of polar lipids such as digalactosyldiacylglyceride (DGDG), phosphatidylcholine (PC) and phosphatidylglycerol (PG). Mg(2+) serves as cofactor. Phosphorylated by KOC1. In terms of tissue distribution, expressed in seedlings, flowers, and roots.

The protein localises to the plastid. The protein resides in the chloroplast outer membrane. It localises to the cytoplasm. Its function is as follows. GTPase involved in protein precursor import into chloroplasts. Seems to recognize chloroplast-destined precursor proteins and regulate their presentation to the translocation channel through GTP hydrolysis. Probably specialized in the import of nuclear encoded non-photosynthetic preproteins from the cytoplasm to the chloroplast. This Arabidopsis thaliana (Mouse-ear cress) protein is Translocase of chloroplast 120, chloroplastic.